The following is a 77-amino-acid chain: Small ribosomal subunit protein bS21 (77 aa).

Belongs to the bacterial ribosomal protein bS21 family.

In Bartonella tribocorum (strain CIP 105476 / IBS 506), this protein is Small ribosomal subunit protein bS21.